The sequence spans 312 residues: HPr kinase/phosphorylase (312 aa).

Active-site residues include His-139 and Lys-160. 154–161 contributes to the ATP binding site; it reads GRSGIGKS. Ser-161 contributes to the Mg(2+) binding site. The active-site Proton acceptor; for phosphorylation activity. Proton donor; for dephosphorylation activity is Asp-178. An important for the catalytic mechanism of both phosphorylation and dephosphorylation region spans residues 201-210; it reads MEIRGLGIIN. Residue Glu-202 coordinates Mg(2+). Arg-245 is an active-site residue. The important for the catalytic mechanism of dephosphorylation stretch occupies residues 266 to 271; sequence PISPGR.

Belongs to the HPrK/P family. In terms of assembly, homohexamer, arranged as bilayered trimers. The cofactor is Mg(2+).

It carries out the reaction [HPr protein]-L-serine + ATP = [HPr protein]-O-phospho-L-serine + ADP + H(+). It catalyses the reaction [HPr protein]-O-phospho-L-serine + phosphate + H(+) = [HPr protein]-L-serine + diphosphate. With respect to regulation, contrary to HPrK/P of B.subtilis and other bacteria, that of M.pneumoniae is active as a kinase at very low ATP concentrations in the absence of fructose 1,6-bisphosphate (FBP). Kinase activity is slightly activated by FBP, and inhibited by inorganic phosphate (Pi), but FBP prevents kinase inhibition by Pi. Dephosphorylation of P-Ser-HPr by M.pneumoniae HPrK/P is strictly dependent on the presence of Pi, and is inhibited by FBP. This unique mode of control of HPrK/P activity is proposed to reflect the parasitic lifestyle of M.pneumoniae, that is strictly adapted to its ecological niche on nutrient-rich human mucous membranes. Its function is as follows. Is a metabolite-sensitive enzyme that catalyzes the ATP-as well as probably the pyrophosphate-dependent phosphorylation of Ser-47 in HPr, a phosphocarrier protein of the phosphoenolpyruvate-dependent sugar phosphotransferase system (PTS). HprK/P also catalyzes the pyrophosphate-producing, inorganic phosphate-dependent dephosphorylation (phosphorolysis) of seryl-phosphorylated HPr (P-Ser-HPr). The regulatory role of HPrK/P in the physiology of M.pneumoniae is not known yet. This is HPr kinase/phosphorylase (hprK) from Mycoplasma pneumoniae (strain ATCC 29342 / M129 / Subtype 1) (Mycoplasmoides pneumoniae).